The primary structure comprises 339 residues: Protein FAM131B (339 aa).

The interval 1 to 22 (MDSTSSLHGSSLHRPSTEQTRT) is disordered. Phosphoserine is present on residues Ser47, Ser114, and Ser117. A disordered region spans residues 222-339 (GPAFGDSQPS…PLLTQPSTPA (118 aa)). 2 stretches are compositionally biased toward polar residues: residues 239–250 (QPASGYSAQEPS) and 324–339 (PTTSFLPLLTQPSTPA). Thr325 carries the post-translational modification Phosphothreonine. A Phosphoserine modification is found at Ser327.

The protein belongs to the FAM131 family.

This is Protein FAM131B (FAM131B) from Bos taurus (Bovine).